A 128-amino-acid polypeptide reads, in one-letter code: Small ribosomal subunit protein uS9 (128 aa).

Residues 106 to 128 (PRVVERKKPGRPKARKRFQFSKR) are disordered. Residues 113–128 (KPGRPKARKRFQFSKR) show a composition bias toward basic residues.

Belongs to the universal ribosomal protein uS9 family.

The protein is Small ribosomal subunit protein uS9 of Porphyromonas gingivalis (strain ATCC 33277 / DSM 20709 / CIP 103683 / JCM 12257 / NCTC 11834 / 2561).